The following is a 96-amino-acid chain: Large ribosomal subunit protein bL27 (96 aa).

Positions 1 to 10 (MLLKLNIQLF) are excised as a propeptide.

This sequence belongs to the bacterial ribosomal protein bL27 family. Post-translationally, the N-terminus is cleaved by ribosomal processing cysteine protease Prp.

The sequence is that of Large ribosomal subunit protein bL27 from Phytoplasma mali (strain AT).